The primary structure comprises 222 residues: MAEKGVKVLGMWASPMVIRVEWALRLKGVEYEYVDEDLANKSADLLRHNPVTKKVPVLVHDGKPVAESTIIVEYIDEVWKGGYPIMPGDPYERAQARFWARFAEDKCNAALYPIFTATGEAQRKAVHEAQQCLKTLETALEGKKFFGGDAVGYLDIVVGWFAHWLPVIEEVTGASVVTHEELPLMKAWFGRFLALDVVKAALPDRDRLLAANKARREQLLSA.

The 80-residue stretch at 4-83 (KGVKVLGMWA…YIDEVWKGGY (80 aa)) folds into the GST N-terminal domain. Residues Ser14, Lys41, Val55, and 67-68 (ES) contribute to the glutathione site. The 132-residue stretch at 89–220 (DPYERAQARF…ANKARREQLL (132 aa)) folds into the GST C-terminal domain.

The protein belongs to the GST superfamily.

It catalyses the reaction RX + glutathione = an S-substituted glutathione + a halide anion + H(+). In terms of biological role, involved in multiple disease resistance (MDR). The protein is Glutathione transferase GST 23 of Zea mays (Maize).